Reading from the N-terminus, the 516-residue chain is L-amino acid oxidase Lm29 (516 aa).

A signal peptide spans 1–18; sequence MNVFFMFSLLFLAALGSC. Cysteine 28 and cysteine 191 form a disulfide bridge. FAD contacts are provided by residues 61-62, 81-82, arginine 89, and 105-108; these read MS, EA, and GPMR. Residue arginine 108 coordinates substrate. A glycan (N-linked (GlcNAc...) asparagine) is linked at asparagine 190. Histidine 241 serves as a coordination point for substrate. Residue valine 279 participates in FAD binding. Cysteine 349 and cysteine 430 are oxidised to a cystine. A glycan (N-linked (GlcNAc...) asparagine) is linked at asparagine 379. Tyrosine 390 is a binding site for substrate. Residues glutamate 475 and 482–487 each bind FAD; that span reads GWIDST. Residue 482-483 participates in substrate binding; the sequence is GW.

Belongs to the flavin monoamine oxidase family. FIG1 subfamily. In terms of assembly, homodimer; non-covalently linked. It depends on FAD as a cofactor. As to expression, expressed by the venom gland.

It is found in the secreted. The catalysed reaction is an L-alpha-amino acid + O2 + H2O = a 2-oxocarboxylate + H2O2 + NH4(+). It catalyses the reaction L-leucine + O2 + H2O = 4-methyl-2-oxopentanoate + H2O2 + NH4(+). The enzyme catalyses L-phenylalanine + O2 + H2O = 3-phenylpyruvate + H2O2 + NH4(+). It carries out the reaction L-tryptophan + O2 + H2O = indole-3-pyruvate + H2O2 + NH4(+). The catalysed reaction is L-methionine + O2 + H2O = 4-methylsulfanyl-2-oxobutanoate + H2O2 + NH4(+). It catalyses the reaction L-isoleucine + O2 + H2O = (S)-3-methyl-2-oxopentanoate + H2O2 + NH4(+). The enzyme catalyses L-tyrosine + O2 + H2O = 3-(4-hydroxyphenyl)pyruvate + H2O2 + NH4(+). Catalyzes an oxidative deamination of predominantly hydrophobic and aromatic L-amino acids, thus producing hydrogen peroxide that may contribute to the diverse toxic effects of this enzyme. Is highly active on L-Met=L-Leu&gt;&gt;L-Phe&gt;L-Trp&gt;L-Tyr&gt;L-Ile, and weakly or not active on L-His, L-Arg, L-Val, L-Gln, L-Thr, L-Lys, and L-Ser. Exhibits a low myotoxicity (a mild myonecrosis is observed after injection in mice quadriceps muscle). In vitro, is cytotoxic to a lot of human cell lines, including AGS (IC(50)=22.7 ug/ml), MCF-7 (IC(50)=1.4 ug/ml), HL-60, HeLa and Jurkat cells, as well as to the parasite Leishmania brasiliensis (IC(50)=2.22 ug/ml). This cytotoxicity is dependent on the production of hydrogen peroxyde, since it is inhibited by catalase, a hydrogen peroxyde scavenger. The polypeptide is L-amino acid oxidase Lm29 (Lachesis muta (South American bushmaster)).